The primary structure comprises 143 residues: 5-hydroxymethyl-dUMP N-hydrolase (143 aa).

Residues glycine 7, isoleucine 9, arginine 10, glycine 11, serine 77, glycine 79, glutamate 83, and serine 107 each coordinate 5-hydroxymethyl-dUMP.

This sequence belongs to the 2'-deoxynucleoside 5'-phosphate N-hydrolase 1 family. In terms of assembly, monomer and homodimer.

It is found in the cytoplasm. The protein localises to the nucleus. The enzyme catalyses 5-hydroxymethyl-dUMP + H2O = 5-hydroxymethyluracil + 2-deoxy-D-ribose 5-phosphate. Its function is as follows. Part of a nucleotide salvage pathway that eliminates epigenetically modified 5-hydroxymethyl-dCMP (hmdCMP) in a two-step process entailing deamination to cytotoxic 5-hydroxymethyl-dUMP (hmdUMP), followed by its hydrolysis into 5-hydroxymethyluracil (hmU) and 2-deoxy-D-ribose 5-phosphate (deoxyribosephosphate). In Danio rerio (Zebrafish), this protein is 5-hydroxymethyl-dUMP N-hydrolase (dnph1).